The primary structure comprises 468 residues: uncharacterized protein (468 aa).

Coiled coils occupy residues N10 to L94 and F147 to I279. The interval T324–D369 is disordered. Residue S342 is modified to Phosphoserine. Residues V399–E445 adopt a coiled-coil conformation.

Its subcellular location is the cytoplasm. This is an uncharacterized protein from Schizosaccharomyces pombe (strain 972 / ATCC 24843) (Fission yeast).